Reading from the N-terminus, the 416-residue chain is E3 ubiquitin-protein ligase RNFT1 (416 aa).

Residues Q27–V45 show a composition bias toward polar residues. 2 disordered regions span residues Q27–P50 and G63–R116. Basic residues predominate over residues G77–R86. 6 consecutive transmembrane segments (helical) span residues L146 to Y166, L184 to F204, V214 to I234, F237 to V257, Y265 to F287, and W302 to G322. The segment at C349–Q400 is required for ubiquitin ligase activity and for protection against ER stress-induced cell death. An RING-type zinc finger spans residues C356 to R394.

Its subcellular location is the endoplasmic reticulum membrane. It carries out the reaction S-ubiquitinyl-[E2 ubiquitin-conjugating enzyme]-L-cysteine + [acceptor protein]-L-lysine = [E2 ubiquitin-conjugating enzyme]-L-cysteine + N(6)-ubiquitinyl-[acceptor protein]-L-lysine.. Its pathway is protein modification; protein ubiquitination. In terms of biological role, E3 ubiquitin-protein ligase that acts in the endoplasmic reticulum (ER)-associated degradation (ERAD) pathway, which targets misfolded proteins that accumulate in the endoplasmic reticulum (ER) for ubiquitination and subsequent proteasome-mediated degradation. Protects cells from ER stress-induced apoptosis. The sequence is that of E3 ubiquitin-protein ligase RNFT1 (rnft1) from Xenopus tropicalis (Western clawed frog).